Here is a 498-residue protein sequence, read N- to C-terminus: ATP synthase subunit beta, chloroplastic (498 aa).

T6 carries the post-translational modification Phosphothreonine. S13 carries the phosphoserine modification. 172 to 179 (GGAGVGKT) contacts ATP.

This sequence belongs to the ATPase alpha/beta chains family. As to quaternary structure, F-type ATPases have 2 components, CF(1) - the catalytic core - and CF(0) - the membrane proton channel. CF(1) has five subunits: alpha(3), beta(3), gamma(1), delta(1), epsilon(1). CF(0) has four main subunits: a(1), b(1), b'(1) and c(9-12).

The protein resides in the plastid. Its subcellular location is the chloroplast thylakoid membrane. The enzyme catalyses ATP + H2O + 4 H(+)(in) = ADP + phosphate + 5 H(+)(out). Its function is as follows. Produces ATP from ADP in the presence of a proton gradient across the membrane. The catalytic sites are hosted primarily by the beta subunits. In Raphanus sativus (Radish), this protein is ATP synthase subunit beta, chloroplastic.